Here is a 289-residue protein sequence, read N- to C-terminus: Cell division protein ZipA (289 aa).

M1 is a topological domain (periplasmic). The helical transmembrane segment at 2-22 threads the bilayer; sequence EIGLREWLIVIGIIVIAGILF. The Cytoplasmic portion of the chain corresponds to 23 to 289; that stretch reads DGWRRMRGSK…ERRALTQRRG (267 aa). Residues 48–141 form a disordered region; the sequence is DEEETTSAEV…KPAQRITEDK (94 aa). Basic and acidic residues-rich tracts occupy residues 64 to 77, 85 to 106, and 123 to 141; these read LDTH…EHDL, REGK…KDEP, and GRDD…TEDK.

This sequence belongs to the ZipA family. As to quaternary structure, interacts with FtsZ via their C-terminal domains.

Its subcellular location is the cell inner membrane. Essential cell division protein that stabilizes the FtsZ protofilaments by cross-linking them and that serves as a cytoplasmic membrane anchor for the Z ring. Also required for the recruitment to the septal ring of downstream cell division proteins. The protein is Cell division protein ZipA of Pseudomonas savastanoi pv. phaseolicola (strain 1448A / Race 6) (Pseudomonas syringae pv. phaseolicola (strain 1448A / Race 6)).